Reading from the N-terminus, the 459-residue chain is Ribulose bisphosphate carboxylase (459 aa).

Asn-111 provides a ligand contact to substrate. The active-site Proton acceptor is the Lys-166. A substrate-binding site is contributed by Lys-168. The Mg(2+) site is built by Lys-191, Asp-193, and Glu-194. Lys-191 is subject to N6-carboxylysine. His-287 acts as the Proton acceptor in catalysis. Substrate-binding residues include Arg-288, His-321, and Ser-368.

This sequence belongs to the RuBisCO large chain family. Type II subfamily. In terms of assembly, homodimer. The cofactor is Mg(2+).

It localises to the cytoplasm. The catalysed reaction is 2 (2R)-3-phosphoglycerate + 2 H(+) = D-ribulose 1,5-bisphosphate + CO2 + H2O. It carries out the reaction D-ribulose 1,5-bisphosphate + O2 = 2-phosphoglycolate + (2R)-3-phosphoglycerate + 2 H(+). Its function is as follows. RuBisCO catalyzes two reactions: the carboxylation of D-ribulose 1,5-bisphosphate, the primary event in carbon dioxide fixation, as well as the oxidative fragmentation of the pentose substrate. Both reactions occur simultaneously and in competition at the same active site. This is Ribulose bisphosphate carboxylase from Halothiobacillus neapolitanus (strain ATCC 23641 / c2) (Thiobacillus neapolitanus).